The chain runs to 590 residues: Suprabasin (590 aa).

Residues 1–25 (MHLARLVGSCSLLLLLGALSGWAAS) form the signal peptide. Disordered regions lie at residues 182-213 (GNEAGRFGQGVHHAAGQAGNEAGRFGQGAHHG), 242-266 (FGQGAHHAAGQAGNEAGRFGQGVHH), 297-338 (GQGA…GVHH), and 545-570 (LNGNHQSGSSSHQGGATTTPLASGAS). 4 stretches are compositionally biased toward low complexity: residues 190–200 (QGVHHAAGQAG), 243–254 (GQGAHHAAGQAG), 297–330 (GQGAHHAAGQAGNEAGRFGQGAHHAAGQAGNEAG), and 546–559 (NGNHQSGSSSHQGG). A compositionally biased stretch (polar residues) spans 560 to 570 (ATTTPLASGAS).

Detected in thymus, uterus and esophagus.

The protein localises to the secreted. This chain is Suprabasin (SBSN), found in Homo sapiens (Human).